Consider the following 136-residue polypeptide: Ribonuclease P protein component (136 aa).

Residues 116–136 (RPQRAAAKGSAGTTQKGTPRA) form a disordered region. The segment covering 126–136 (AGTTQKGTPRA) has biased composition (polar residues).

It belongs to the RnpA family. As to quaternary structure, consists of a catalytic RNA component (M1 or rnpB) and a protein subunit.

The enzyme catalyses Endonucleolytic cleavage of RNA, removing 5'-extranucleotides from tRNA precursor.. RNaseP catalyzes the removal of the 5'-leader sequence from pre-tRNA to produce the mature 5'-terminus. It can also cleave other RNA substrates such as 4.5S RNA. The protein component plays an auxiliary but essential role in vivo by binding to the 5'-leader sequence and broadening the substrate specificity of the ribozyme. The chain is Ribonuclease P protein component from Pseudarthrobacter chlorophenolicus (strain ATCC 700700 / DSM 12829 / CIP 107037 / JCM 12360 / KCTC 9906 / NCIMB 13794 / A6) (Arthrobacter chlorophenolicus).